The following is an 815-amino-acid chain: uncharacterized protein (815 aa).

Residues 1-21 form the signal peptide; the sequence is MNIYRLSFVSCLVMAMPCAMA. An intrachain disulfide couples C795 to C814.

Belongs to the fimbrial export usher family.

The protein resides in the cell outer membrane. In terms of biological role, could be involved in the export and assembly of the putative YbgD fimbrial subunit across the outer membrane. This is an uncharacterized protein from Escherichia coli (strain K12).